The sequence spans 132 residues: Rubredoxin-1 (132 aa).

The Rubredoxin-like domain maps to 1–53 (MSRYQCPDCQYIYDENKGEPHEGFHPNTSWNDIPKDWACPDCAVRDKVDFIFL). Fe cation-binding residues include C6, C9, C39, and C42. A disordered region spans residues 108–132 (TEVLDQASTPQVVRKSSTRKKMRNK). The span at 113–122 (QASTPQVVRK) shows a compositional bias: polar residues. A compositionally biased stretch (basic residues) spans 123-132 (SSTRKKMRNK).

The protein belongs to the rubredoxin family. Requires Fe(3+) as cofactor.

The protein resides in the cytoplasm. It participates in hydrocarbon metabolism; alkane degradation. Not known. Probably involved in an electron transport pathway, but not required for the hydrocarbon hydroxylating system. Seems to be non-functional. The chain is Rubredoxin-1 (alkF) from Ectopseudomonas oleovorans (Pseudomonas oleovorans).